We begin with the raw amino-acid sequence, 453 residues long: Ribulose bisphosphate carboxylase large chain (453 aa).

A propeptide spanning residues 1 to 2 (MS) is cleaved from the precursor. Proline 3 bears the N-acetylproline mark. Lysine 14 bears the N6,N6,N6-trimethyllysine mark. 2 residues coordinate substrate: asparagine 123 and threonine 173. Lysine 175 serves as the catalytic Proton acceptor. Lysine 177 is a substrate binding site. Mg(2+) contacts are provided by lysine 201, aspartate 203, and glutamate 204. Lysine 201 bears the N6-carboxylysine mark. Residue histidine 294 is the Proton acceptor of the active site. The substrate site is built by arginine 295, histidine 327, and serine 379.

The protein belongs to the RuBisCO large chain family. Type I subfamily. Heterohexadecamer of 8 large chains and 8 small chains; disulfide-linked. The disulfide link is formed within the large subunit homodimers. Requires Mg(2+) as cofactor. Post-translationally, the disulfide bond which can form in the large chain dimeric partners within the hexadecamer appears to be associated with oxidative stress and protein turnover.

It is found in the plastid. Its subcellular location is the chloroplast. The catalysed reaction is 2 (2R)-3-phosphoglycerate + 2 H(+) = D-ribulose 1,5-bisphosphate + CO2 + H2O. It carries out the reaction D-ribulose 1,5-bisphosphate + O2 = 2-phosphoglycolate + (2R)-3-phosphoglycerate + 2 H(+). In terms of biological role, ruBisCO catalyzes two reactions: the carboxylation of D-ribulose 1,5-bisphosphate, the primary event in carbon dioxide fixation, as well as the oxidative fragmentation of the pentose substrate in the photorespiration process. Both reactions occur simultaneously and in competition at the same active site. In Galium parisiense (Wall bedstraw), this protein is Ribulose bisphosphate carboxylase large chain.